We begin with the raw amino-acid sequence, 271 residues long: Ribosomal RNA small subunit methyltransferase A (271 aa).

Residues N22, L24, G49, E70, D96, and N116 each coordinate S-adenosyl-L-methionine.

The protein belongs to the class I-like SAM-binding methyltransferase superfamily. rRNA adenine N(6)-methyltransferase family. RsmA subfamily.

Its subcellular location is the cytoplasm. It catalyses the reaction adenosine(1518)/adenosine(1519) in 16S rRNA + 4 S-adenosyl-L-methionine = N(6)-dimethyladenosine(1518)/N(6)-dimethyladenosine(1519) in 16S rRNA + 4 S-adenosyl-L-homocysteine + 4 H(+). Functionally, specifically dimethylates two adjacent adenosines (A1518 and A1519) in the loop of a conserved hairpin near the 3'-end of 16S rRNA in the 30S particle. May play a critical role in biogenesis of 30S subunits. In Sphingopyxis alaskensis (strain DSM 13593 / LMG 18877 / RB2256) (Sphingomonas alaskensis), this protein is Ribosomal RNA small subunit methyltransferase A.